An 83-amino-acid chain; its full sequence is Cobrotoxin (83 aa).

The signal sequence occupies residues 1-21 (MKTLLLTLLVVTIVCLDLGYT). Disulfide bonds link cysteine 24-cysteine 45, cysteine 38-cysteine 62, cysteine 64-cysteine 75, and cysteine 76-cysteine 81.

It belongs to the three-finger toxin family. Short-chain subfamily. Type I alpha-neurotoxin sub-subfamily. As to expression, expressed by the venom gland.

It localises to the secreted. Binds to muscle nicotinic acetylcholine receptor (nAChR) and inhibit acetylcholine from binding to the receptor, thereby impairing neuromuscular transmission. Has a higher toxicity than cobrotoxin-b. In vivo, when tested on rat arthritis models, shows anti-inflammation and immunosuppression effects. This chain is Cobrotoxin, found in Naja atra (Chinese cobra).